Consider the following 407-residue polypeptide: Rubber oxygenase (407 aa).

The tat-type signal signal peptide spans 1–30; the sequence is MDGFSRRRMLMTGGALGAVGALGAATRALA. His198 is a binding site for heme.

Belongs to the rubber oxygenase Lcp family. It depends on heme b as a cofactor. In terms of processing, exported by the Tat system. The position of the signal peptide cleavage has not been experimentally proven.

It is found in the secreted. It functions in the pathway biopolymer metabolism. Functionally, involved in the initial step of rubber degradation. Catalyzes the oxidative C-C cleavage of poly(cis-1,4-isoprene) in synthetic as well as in natural rubber by the addition of oxygen (O2) to the double bonds, leading to a mixture of oligonucleotide-isoprenoids with terminal keto and aldehyde groups (endo-type cleavage). The cleavage products are of different lengths, ranging from C20 (four isoprene units) to higher oligo-isoprenoids. Is not able to cleave low-molecular-weight substrate analogs with isoprenoid structure such as squalene (1,4-trans-isoprenoid), carotenoids, or alpha-tocopherol. This Streptomyces sp. (strain K30) protein is Rubber oxygenase.